A 180-amino-acid polypeptide reads, in one-letter code: UPF0227 protein YcfP (180 aa).

This sequence belongs to the UPF0227 family.

This is UPF0227 protein YcfP from Salmonella arizonae (strain ATCC BAA-731 / CDC346-86 / RSK2980).